Consider the following 612-residue polypeptide: Lipoma-preferred partner (612 aa).

Disordered regions lie at residues 1–118 (MSHP…SSLD) and 132–219 (ECSS…SSRP). The segment covering 26–40 (THSFGNPSISVSTQQ) has biased composition (polar residues). The span at 41–53 (PPKKFAPVVAPKP) shows a compositional bias: low complexity. An N6-acetyllysine modification is found at Lys-108. Residues Ser-116 and Ser-151 each carry the phosphoserine modification. 2 stretches are compositionally biased toward polar residues: residues 143–158 (QSSTGSTASPPVSTPV) and 171–181 (PLTATKKSTLK). Residues 183–193 (QPAPQAGPIPV) show a composition bias toward pro residues. The segment covering 209–219 (SYTTASTSSRP) has biased composition (polar residues). Phosphotyrosine occurs at positions 244 and 301. Residues 307–387 (YGGRNDSDPT…LGPSSVAPSF (81 aa)) are disordered. Over residues 314-323 (DPTYGQQGHP) the composition is skewed to polar residues. Residue Lys-327 forms a Glycyl lysine isopeptide (Lys-Gly) (interchain with G-Cter in SUMO1) linkage. Position 333 is a phosphothreonine (Thr-333). The residue at position 375 (Ser-375) is a Phosphoserine. 3 LIM zinc-binding domains span residues 414 to 473 (GRCA…INTL), 474 to 534 (EQCN…KFAP), and 535 to 603 (RCSV…RIRV).

The protein belongs to the zyxin/ajuba family. As to quaternary structure, interacts with VASP, with PDZ domains of SCRIB and with ACTN1/alpha-actinin. Expressed in a wide variety of tissues but no or very low expression in brain and peripheral leukocytes.

It localises to the nucleus. The protein resides in the cytoplasm. Its subcellular location is the cell junction. It is found in the cell membrane. May play a structural role at sites of cell adhesion in maintaining cell shape and motility. In addition to these structural functions, it may also be implicated in signaling events and activation of gene transcription. May be involved in signal transduction from cell adhesion sites to the nucleus allowing successful integration of signals arising from soluble factors and cell-cell adhesion sites. Also suggested to serve as a scaffold protein upon which distinct protein complexes are assembled in the cytoplasm and in the nucleus. This chain is Lipoma-preferred partner (LPP), found in Homo sapiens (Human).